The chain runs to 390 residues: uncharacterized protein (390 aa).

Transmembrane regions (helical) follow at residues 4–24, 40–60, 68–88, 98–118, 130–150, 159–179, 205–225, 236–256, 273–293, 295–315, 329–349, and 356–376; these read IWLFFSVMFVIGTDTFLLSPL, GWMVSAYALGYALFAFIAGPI, TVMLWGLAGFIVSTFLCGIAP, FAAGVSAAFVTPQIWASIPVI, IATAGLAASQMLGLPIGGFLA, FVLSACSLILLLILAAVMPGI, VILLAYFLFQTGNFASFSFLG, VSQIGAAMLVLGLGNMLGSLI, GMLLMGALYFALPFFPNLFLV, AGFFLTFFTAGIIFPLMMGVF, LSNAAMYAGTTVGTSIAGFLY, and GAVTGFTAILFILSMTLYQTI.

The protein belongs to the major facilitator superfamily.

The protein localises to the cell membrane. This is an uncharacterized protein from Bacillus subtilis (strain 168).